Here is a 625-residue protein sequence, read N- to C-terminus: Endo-1,4-beta-xylanase A (625 aa).

Residues 1-19 form the signal peptide; it reads MKLFQIFPLLLSLTSVTLA. One can recognise a GH11 1 domain in the interval 35–231; the sequence is VSTGHDVKKI…TGGGCSGSVE (197 aa). The tract at residues 245–283 is disordered; it reads DGKSKGGSSSGGSNGQGLGNGQGNGQGQGNGQGQSATGS. The segment covering 252 to 276 has biased composition (gly residues); sequence SSSGGSNGQGLGNGQGNGQGQGNGQ. Residues 255-279 are linker; that stretch reads GGSNGQGLGNGQGNGQGQGNGQGQS. A run of 2 repeats spans residues 259 to 268 and 269 to 278. Positions 259–278 are 2 X 10 AA tandem repeats of G-Q-G-[LQ]-G-N-G-Q-G-[NQ]; the sequence is GQGLGNGQGNGQGQGNGQGQ. CBM10 domains lie at 285 to 324 and 332 to 371; these read KCPS…CGCG and NCPS…CGCG. The linker stretch occupies residues 374 to 403; sequence NTTPTTTTKKSNNSQPTQGQSNNNSSTNTN. The interval 379–399 is disordered; sequence TTTKKSNNSQPTQGQSNNNSS. The GH11 2 domain occupies 416–617; the sequence is TETSNKVGSI…GSGTSGTADF (202 aa). The Nucleophile role is filled by Glu510. Glu603 (proton donor) is an active-site residue.

This sequence belongs to the glycosyl hydrolase 11 (cellulase G) family.

The enzyme catalyses Endohydrolysis of (1-&gt;4)-beta-D-xylosidic linkages in xylans.. It participates in glycan degradation; xylan degradation. Functionally, hydrolyzes 1,4-beta linked polysaccharide backbones of xylans, one of the major hemicellulose components in hardwoods and softwoods. It is more active against xylopentaose than xylotetraose, has trace activity against xylotriose. The major products released from hydrolysis of xylooligosaccharides are xylobiose and xylotriose. The reiterated 40 AA domain is involved in binding the cellulase-hemicellulase complex. The chain is Endo-1,4-beta-xylanase A (XYNA) from Piromyces sp.